A 504-amino-acid polypeptide reads, in one-letter code: Arabinose import ATP-binding protein AraG (504 aa).

ABC transporter domains are found at residues 8-243 and 256-499; these read LSFR…MVGR and YGEE…MPKV. 40 to 47 serves as a coordination point for ATP; it reads GENGAGKS.

This sequence belongs to the ABC transporter superfamily. Arabinose importer (TC 3.A.1.2.2) family. The complex is composed of two ATP-binding proteins (AraG), two transmembrane proteins (AraH) and a solute-binding protein (AraF).

The protein resides in the cell inner membrane. It catalyses the reaction L-arabinose(out) + ATP + H2O = L-arabinose(in) + ADP + phosphate + H(+). Functionally, part of the ABC transporter complex AraFGH involved in arabinose import. Responsible for energy coupling to the transport system. This is Arabinose import ATP-binding protein AraG from Escherichia coli O6:K15:H31 (strain 536 / UPEC).